A 1323-amino-acid chain; its full sequence is Inositol hexakisphosphate and diphosphoinositol-pentakisphosphate kinase (1323 aa).

26–27 (RK) provides a ligand contact to substrate. Residues Arg109, Lys162, His169, Arg188, 212–215 (EEFI), and 221–223 (DVK) each bind ATP. 188–189 (RK) is a substrate binding site. The substrate site is built by Lys223 and Arg237. Residues Asp284 and 296–298 (DVN) each bind ATP. 301-304 (SFVK) contributes to the substrate binding site. A polyphosphoinositide-binding domain region spans residues 355–426 (TTPSGKLAEL…VLELARALVI (72 aa)). Composition is skewed to polar residues over residues 933–947 (FNLSTNPKPATSSRS) and 977–992 (VTPTQLSTPSVTNDDL). Disordered regions lie at residues 933 to 1022 (FNLS…SEDD), 1043 to 1107 (AMAD…GGGK), and 1134 to 1155 (IVIPTPVPSTTTAVVEDEASER). The span at 993 to 1006 (SISSNAESTAAEST) shows a compositional bias: low complexity. A compositionally biased stretch (basic and acidic residues) spans 1062 to 1074 (KSMEEGDKPHGEW). Residues 1090–1101 (SNEMESNNESME) are compositionally biased toward low complexity.

The protein belongs to the histidine acid phosphatase family. VIP1 subfamily.

The protein localises to the cytoplasm. It localises to the cytosol. It carries out the reaction 1D-myo-inositol hexakisphosphate + ATP = 1-diphospho-1D-myo-inositol 2,3,4,5,6-pentakisphosphate + ADP. The catalysed reaction is 5-diphospho-1D-myo-inositol 1,2,3,4,6-pentakisphosphate + ATP + H(+) = 1,5-bis(diphospho)-1D-myo-inositol 2,3,4,6-tetrakisphosphate + ADP. Its function is as follows. Bifunctional inositol kinase that acts in concert with the IP6K kinases to synthesize the diphosphate group-containing inositol pyrophosphates diphosphoinositol pentakisphosphate, PP-InsP5, and bis-diphosphoinositol tetrakisphosphate, (PP)2-InsP4. PP-InsP5 and (PP)2-InsP4, also respectively called InsP7 and InsP8, may regulate a variety of cellular processes, including apoptosis, vesicle trafficking, cytoskeletal dynamics, and exocytosis. Phosphorylates inositol hexakisphosphate (InsP6) at position 1 to produce PP-InsP5 which is in turn phosphorylated by IP6Ks to produce (PP)2-InsP4. Alternatively, phosphorylates PP-InsP5 at position 1, produced by IP6Ks from InsP6, to produce (PP)2-InsP4. The polypeptide is Inositol hexakisphosphate and diphosphoinositol-pentakisphosphate kinase (Caenorhabditis elegans).